Reading from the N-terminus, the 237-residue chain is LexA repressor (237 aa).

Residues 26-46 (FDEMKDALDLRSKSGIHRLIT) constitute a DNA-binding region (H-T-H motif). Residues Ser158 and Lys196 each act as for autocatalytic cleavage activity in the active site.

This sequence belongs to the peptidase S24 family. Homodimer.

The enzyme catalyses Hydrolysis of Ala-|-Gly bond in repressor LexA.. Its function is as follows. Represses a number of genes involved in the response to DNA damage (SOS response), including recA and lexA. In the presence of single-stranded DNA, RecA interacts with LexA causing an autocatalytic cleavage which disrupts the DNA-binding part of LexA, leading to derepression of the SOS regulon and eventually DNA repair. The chain is LexA repressor from Rhodopseudomonas palustris (strain BisB18).